Consider the following 350-residue polypeptide: Glucose-6-phosphate 3-dehydrogenase (350 aa).

This sequence belongs to the Gfo/Idh/MocA family.

The catalysed reaction is D-glucose 6-phosphate + NAD(+) = 3-dehydro-D-glucose 6-phosphate + NADH + H(+). It participates in antibiotic biosynthesis; kanosamine biosynthesis. Its function is as follows. Involved in the biosynthesis of kanosamine (3-amino-3-deoxy-D-glucose), which is known to have antibiotic and antifungal properties, and to be a precursor of the antibiotic neotrehalosadiamine (3,3'-diamino-3,3'-dideoxy-alpha,beta-trehalose (NTD)). Catalyzes the oxidation of glucose 6-phosphate to 3-oxo-D-glucose 6-phosphate. It can only use NAD. The polypeptide is Glucose-6-phosphate 3-dehydrogenase (ntdC) (Bacillus subtilis (strain 168)).